A 336-amino-acid chain; its full sequence is Holliday junction branch migration complex subunit RuvB (336 aa).

Residues 4-184 (ADRIISAIAK…FGIVQRLEFY (181 aa)) form a large ATPase domain (RuvB-L) region. Residues Ile-23, Arg-24, Gly-65, Lys-68, Thr-69, Thr-70, 131-133 (EDY), Arg-174, Tyr-184, and Arg-221 contribute to the ATP site. Position 69 (Thr-69) interacts with Mg(2+). A small ATPAse domain (RuvB-S) region spans residues 185-255 (SIEDLTSIVM…IAKAALAMLD (71 aa)). Residues 258–336 (QAGFDYLDRK…HFGLAKLADK (79 aa)) form a head domain (RuvB-H) region. Arg-294, Arg-313, and Arg-318 together coordinate DNA.

It belongs to the RuvB family. In terms of assembly, homohexamer. Forms an RuvA(8)-RuvB(12)-Holliday junction (HJ) complex. HJ DNA is sandwiched between 2 RuvA tetramers; dsDNA enters through RuvA and exits via RuvB. An RuvB hexamer assembles on each DNA strand where it exits the tetramer. Each RuvB hexamer is contacted by two RuvA subunits (via domain III) on 2 adjacent RuvB subunits; this complex drives branch migration. In the full resolvosome a probable DNA-RuvA(4)-RuvB(12)-RuvC(2) complex forms which resolves the HJ.

The protein localises to the cytoplasm. The enzyme catalyses ATP + H2O = ADP + phosphate + H(+). Functionally, the RuvA-RuvB-RuvC complex processes Holliday junction (HJ) DNA during genetic recombination and DNA repair, while the RuvA-RuvB complex plays an important role in the rescue of blocked DNA replication forks via replication fork reversal (RFR). RuvA specifically binds to HJ cruciform DNA, conferring on it an open structure. The RuvB hexamer acts as an ATP-dependent pump, pulling dsDNA into and through the RuvAB complex. RuvB forms 2 homohexamers on either side of HJ DNA bound by 1 or 2 RuvA tetramers; 4 subunits per hexamer contact DNA at a time. Coordinated motions by a converter formed by DNA-disengaged RuvB subunits stimulates ATP hydrolysis and nucleotide exchange. Immobilization of the converter enables RuvB to convert the ATP-contained energy into a lever motion, pulling 2 nucleotides of DNA out of the RuvA tetramer per ATP hydrolyzed, thus driving DNA branch migration. The RuvB motors rotate together with the DNA substrate, which together with the progressing nucleotide cycle form the mechanistic basis for DNA recombination by continuous HJ branch migration. Branch migration allows RuvC to scan DNA until it finds its consensus sequence, where it cleaves and resolves cruciform DNA. The chain is Holliday junction branch migration complex subunit RuvB from Actinobacillus succinogenes (strain ATCC 55618 / DSM 22257 / CCUG 43843 / 130Z).